A 247-amino-acid chain; its full sequence is Segregation and condensation protein A (247 aa).

This sequence belongs to the ScpA family. As to quaternary structure, component of a cohesin-like complex composed of ScpA, ScpB and the Smc homodimer, in which ScpA and ScpB bind to the head domain of Smc. The presence of the three proteins is required for the association of the complex with DNA.

Its subcellular location is the cytoplasm. In terms of biological role, participates in chromosomal partition during cell division. May act via the formation of a condensin-like complex containing Smc and ScpB that pull DNA away from mid-cell into both cell halves. In Bacillus cereus (strain G9842), this protein is Segregation and condensation protein A.